Consider the following 505-residue polypeptide: Pup deamidase/depupylase (505 aa).

An ATP-binding site is contributed by 6–10; it reads GTEVE. Mg(2+) contacts are provided by Glu8 and Tyr93. Catalysis depends on Asp95, which acts as the Proton acceptor. Mg(2+) is bound at residue Glu100. 102-103 provides a ligand contact to ATP; that stretch reads SA. His156 serves as a coordination point for Mg(2+). Positions 158 and 240 each coordinate ATP. His242 contacts Mg(2+).

Belongs to the Pup ligase/Pup deamidase family. Pup deamidase subfamily. Interacts with the prokaryotic ubiquitin-like protein Pup. Requires ATP as cofactor.

It catalyses the reaction [prokaryotic ubiquitin-like protein]-C-terminal-L-glutamine + H2O = [prokaryotic ubiquitin-like protein]-C-terminal-L-glutamate + NH4(+). It functions in the pathway protein degradation; proteasomal Pup-dependent pathway. Functionally, specifically catalyzes the deamidation of the C-terminal glutamine of the prokaryotic ubiquitin-like protein Pup to glutamate, thereby rendering Pup competent for conjugation. Also displays depupylase (DPUP) activity, removing conjugated Pup from target proteins; is thus involved in the recycling of Pup and may function similarly to deubiquitinases (DUBs) in eukaryotes to prevent or promote proteasomal degradation of certain proteins. This chain is Pup deamidase/depupylase (dop), found in Mycobacterium tuberculosis (strain CDC 1551 / Oshkosh).